A 178-amino-acid chain; its full sequence is Interleukin-10 (178 aa).

Residues 1-18 (MHSSALLCCLVFLAGVAA) form the signal peptide. 2 disulfide bridges follow: C30–C126 and C80–C132. N134 carries N-linked (GlcNAc...) asparagine glycosylation.

It belongs to the IL-10 family. In terms of assembly, homodimer. Interacts with IL10RA and IL10RB.

The protein resides in the secreted. Functionally, major immune regulatory cytokine that acts on many cells of the immune system where it has profound anti-inflammatory functions, limiting excessive tissue disruption caused by inflammation. Mechanistically, IL10 binds to its heterotetrameric receptor comprising IL10RA and IL10RB leading to JAK1 and STAT2-mediated phosphorylation of STAT3. In turn, STAT3 translocates to the nucleus where it drives expression of anti-inflammatory mediators. Targets antigen-presenting cells (APCs) such as macrophages and monocytes and inhibits their release of pro-inflammatory cytokines including granulocyte-macrophage colony-stimulating factor /GM-CSF, granulocyte colony-stimulating factor/G-CSF, IL-1 alpha, IL-1 beta, IL-6, IL-8 and TNF-alpha. Also interferes with antigen presentation by reducing the expression of MHC-class II and co-stimulatory molecules, thereby inhibiting their ability to induce T cell activation. In addition, controls the inflammatory response of macrophages by reprogramming essential metabolic pathways including mTOR signaling. The sequence is that of Interleukin-10 (IL10) from Bos taurus (Bovine).